A 510-amino-acid polypeptide reads, in one-letter code: Peroxidase 2 (510 aa).

A signal peptide spans 1–19 (MRLTYLPLFAGIAIQSASA). A propeptide spanning residues 20-58 (LPDFFKSSVLKPRRTNSLLINPDAQPDLPTAQQASTAAA) is cleaved from the precursor. Catalysis depends on Asp-228, which acts as the Proton acceptor. His-362 contributes to the heme binding site.

As to quaternary structure, homodimer. Heme b is required as a cofactor.

Peroxidase capable of degrading beta-carotene. In Mycetinis scorodonius (Garlic mushroom), this protein is Peroxidase 2.